Reading from the N-terminus, the 56-residue chain is MTSTTLVKCACEPCLCNVDPSKAIDRNGLYYCSEACADGHTGGSKGCGHTGCNCHG.

Cysteine 9, cysteine 11, cysteine 14, cysteine 16, cysteine 32, cysteine 36, histidine 40, cysteine 47, histidine 49, cysteine 52, and cysteine 54 together coordinate Zn(2+).

This sequence belongs to the metallothionein superfamily. Type 14 family.

Its function is as follows. May play a role in essential metal ion homeostasis (especially zinc homeostasis) and resistance to certain non-essential metal ions. Binds four zinc ions. This is Metallothionein (smtA) from Synechococcus elongatus (strain ATCC 33912 / PCC 7942 / FACHB-805) (Anacystis nidulans R2).